A 129-amino-acid polypeptide reads, in one-letter code: uncharacterized protein (129 aa).

It is found in the cytoplasm. Its subcellular location is the cytosol. The protein resides in the nucleus. This is an uncharacterized protein from Schizosaccharomyces pombe (strain 972 / ATCC 24843) (Fission yeast).